A 466-amino-acid chain; its full sequence is MAQNIGKVVQVIGPVVDVKFQKDKLPKLNNAVNIELNGHTLVIEVAQQLGDDIVRCIAMDSTDGLMRNQEAVDTGSAIQVPVGKATLGRMFNVLGEPIDGKPFDTKDVVMHPIHRHPPSFEEQQTQPEMFETGIKVVDLICPYVRGGKIGLFGGAGVGKTVLIQELINNIATQHGGLSVFAGVGERTREGNDLYYEMMESGVINKTALCFGQMNEPPGARMRIALAGLTMAEYFRDDEGQDVLLFIDNIFRFTQAGSEVSALLGRMPSAVGYQPTLATEMGALQERITSTSKGSITSVQAVYVPADDLTDPAPATTFAHLDATTVLSRAITEKGIYPAVDPLDSTSRILDPKIVGQEHYETAREVQEILQRYKELQDIIAILGMDELSDADKITVSRARKVERFLSQPFNVAEQFTGTAGVYVTIGDTIKGFKEILEGQHDDLPESAFLLVGTIEDAVVKAKKIKG.

Residue 153–160 (GGAGVGKT) coordinates ATP.

Belongs to the ATPase alpha/beta chains family. F-type ATPases have 2 components, CF(1) - the catalytic core - and CF(0) - the membrane proton channel. CF(1) has five subunits: alpha(3), beta(3), gamma(1), delta(1), epsilon(1). CF(0) has three main subunits: a, b and c.

It is found in the cell membrane. It carries out the reaction 4 Na(+)(in) + ATP + H2O = 4 Na(+)(out) + ADP + phosphate + H(+). Its activity is regulated as follows. Inhibited by nitrate. In terms of biological role, produces ATP from ADP in the presence of a sodium ion gradient across the membrane. The beta chain is the catalytic subunit. The polypeptide is ATP synthase subunit beta, sodium ion specific (Acetobacterium woodii (strain ATCC 29683 / DSM 1030 / JCM 2381 / KCTC 1655 / WB1)).